The following is a 71-amino-acid chain: Small integral membrane protein 31 (71 aa).

A helical transmembrane segment spans residues 8 to 28; sequence LEVAFILLAFFIFSLFTLASI. Over residues 48–57 the composition is skewed to basic residues; that stretch reads RKRKEFKGKK. Residues 48–71 form a disordered region; it reads RKRKEFKGKKNCSDEEHKIETMQP. Residue Asn-58 is glycosylated (N-linked (GlcNAc...) asparagine). The span at 58–71 shows a compositional bias: basic and acidic residues; it reads NCSDEEHKIETMQP.

It localises to the membrane. This Mus musculus (Mouse) protein is Small integral membrane protein 31.